Here is a 571-residue protein sequence, read N- to C-terminus: uncharacterized protein (571 aa).

11 helical membrane passes run 5–27, 34–56, 61–79, 92–114, 161–183, 391–408, 412–434, 455–474, 484–506, 513–532, and 547–569; these read VILNVLKNPFIALFLTLSLGYLV, TFVLGGISGSLIIGVIIGQLNIT, IGSLFFALFIYAGGYQGGA, LLASSTITCVLGLLCVLVFAWIF, TVGYAVCYIFGSFGPIILLATIF, FIFFGLGMVLGYIFGLIS, FGISITLGAGVDCLLSGLIFGWI, LGLAIFVASVGITAGPQAIT, FFLGIGVTIIPQVISFYISYYLL, VLLATIAGGRSVNPGFAALL, and SYALANIWLTLWGPVIVALVTII.

The protein belongs to the AAE transporter (TC 2.A.81) family.

It is found in the cell membrane. This is an uncharacterized protein from Francisella tularensis subsp. tularensis (strain SCHU S4 / Schu 4).